The following is a 176-amino-acid chain: Small ribosomal subunit protein uS5c (176 aa).

One can recognise an S5 DRBM domain in the interval 26-89 (LVERLIKISR…TDGRKNLIEL (64 aa)).

The protein belongs to the universal ribosomal protein uS5 family. As to quaternary structure, part of the 30S ribosomal subunit. Contacts protein S4.

It is found in the plastid. Its subcellular location is the chloroplast. In terms of biological role, with S4 and S12 plays an important role in translational accuracy. This chain is Small ribosomal subunit protein uS5c (rps5), found in Phaeodactylum tricornutum (strain CCAP 1055/1).